Here is a 181-residue protein sequence, read N- to C-terminus: Inner membrane-spanning protein YciB (181 aa).

5 consecutive transmembrane segments (helical) span residues 10 to 30, 50 to 70, 72 to 92, 118 to 138, and 148 to 168; these read LIIFFAVYKFFDIYIASGALI, MHLITFAMVTVFGTLTLVFHD, AFIKWKVTIIYALFALALGVS, VTWYWVSFFAICGLVNIYVAF, and FKVFGLTALTLINTVITVFYL.

This sequence belongs to the YciB family.

Its subcellular location is the cell inner membrane. In terms of biological role, plays a role in cell envelope biogenesis, maintenance of cell envelope integrity and membrane homeostasis. In Shewanella sp. (strain ANA-3), this protein is Inner membrane-spanning protein YciB.